We begin with the raw amino-acid sequence, 166 residues long: Chemoreceptor glutamine deamidase CheD (166 aa).

It belongs to the CheD family. As to quaternary structure, forms a complex with CheC.

It catalyses the reaction L-glutaminyl-[protein] + H2O = L-glutamyl-[protein] + NH4(+). Functionally, deamidates glutamine residues to glutamate on methyl-accepting chemotaxis receptors (MCPs). CheD-mediated MCP deamidation is required for productive communication of the conformational signals of the chemoreceptors to the CheA kinase. This is Chemoreceptor glutamine deamidase CheD from Bacillus velezensis (strain DSM 23117 / BGSC 10A6 / LMG 26770 / FZB42) (Bacillus amyloliquefaciens subsp. plantarum).